The primary structure comprises 1348 residues: Phosphoribosylformylglycinamidine synthase (1348 aa).

ATP contacts are provided by residues 300 to 311 (GAATGAGGEIRD) and Ala-701. Mg(2+) contacts are provided by Asp-702, Glu-741, Asn-745, and Asp-941. Ser-943 is a binding site for ATP. Residues 1099 to 1348 (VAILREQGVN…MFRNARVWCG (250 aa)) enclose the Glutamine amidotransferase type-1 domain. Cys-1192 functions as the Nucleophile in the catalytic mechanism. Active-site residues include His-1313 and Glu-1315.

It in the N-terminal section; belongs to the FGAMS family. Monomer.

The protein resides in the cytoplasm. The enzyme catalyses N(2)-formyl-N(1)-(5-phospho-beta-D-ribosyl)glycinamide + L-glutamine + ATP + H2O = 2-formamido-N(1)-(5-O-phospho-beta-D-ribosyl)acetamidine + L-glutamate + ADP + phosphate + H(+). Its pathway is purine metabolism; IMP biosynthesis via de novo pathway; 5-amino-1-(5-phospho-D-ribosyl)imidazole from N(2)-formyl-N(1)-(5-phospho-D-ribosyl)glycinamide: step 1/2. In terms of biological role, phosphoribosylformylglycinamidine synthase involved in the purines biosynthetic pathway. Catalyzes the ATP-dependent conversion of formylglycinamide ribonucleotide (FGAR) and glutamine to yield formylglycinamidine ribonucleotide (FGAM) and glutamate. The protein is Phosphoribosylformylglycinamidine synthase of Xanthomonas campestris pv. campestris (strain ATCC 33913 / DSM 3586 / NCPPB 528 / LMG 568 / P 25).